We begin with the raw amino-acid sequence, 215 residues long: Chaperone protein TorD (215 aa).

Belongs to the TorD/DmsD family. TorD subfamily.

The protein localises to the cytoplasm. Its function is as follows. Involved in the biogenesis of TorA. Acts on TorA before the insertion of the molybdenum cofactor and, as a result, probably favors a conformation of the apoenzyme that is competent for acquiring the cofactor. The polypeptide is Chaperone protein TorD (Vibrio atlanticus (strain LGP32) (Vibrio splendidus (strain Mel32))).